We begin with the raw amino-acid sequence, 506 residues long: MKNRDRILVKIDKLREKRDILCQQRFLYTIPFQEDIYAIAYTRSSKKSNLNLLENSVLYKKYSVITIKRLITQLRQQNFLKIFFRDCYRNQLDNPKNHPYNKLLLEGLILILEVFSPIQIQLGRNEWKSLQSIHSLFLFMENKFLHSNFILDIKIPQSLHPEILIRIFRRRIQDTPFLHLSRSILHEYQDPITSDTSISPFSREQNSLLILLWNYYVYEFEYLVVSSWKRFSRLQSIFSLDRIDRTHFDRKIKHVIRPYWIISSKISSFTKNPCIHYVRYKNHSVLAFQGTNYLAKKWRNYLLNFWQYHFHCWVQPHRIFLKRFSRNSFSFLGYILGIRTRINKVQAKMEDELPITCLITKELCPIIPFLLLVNSLARGGFCTNLGRPVSKLSWTTLTDDDILKKFDQIWRSVYYYYSGSINNHGLFRLRYIFRFSCAKTLACKHKSTTRIVWKRFSLNSFLRSFLKKPELVNSSVSKYYLHKRRFWYLDIIQINPLTISLRERYN.

This sequence belongs to the intron maturase 2 family. MatK subfamily.

Its subcellular location is the plastid. The protein localises to the chloroplast. Functionally, usually encoded in the trnK tRNA gene intron. Probably assists in splicing its own and other chloroplast group II introns. The protein is Maturase K of Angiopteris evecta (Mule's foot fern).